Reading from the N-terminus, the 379-residue chain is L-lactate dehydrogenase (379 aa).

One can recognise an FMN hydroxy acid dehydrogenase domain in the interval 1 to 379 (MIISSSTDYR…ISPDSLVRGL (379 aa)). Tyr24 is a substrate binding site. FMN-binding residues include Ser106 and Gln127. Tyr129 serves as a coordination point for substrate. Thr155 lines the FMN pocket. Residue Arg164 participates in substrate binding. Residue Lys251 coordinates FMN. His275 serves as the catalytic Proton acceptor. Arg278 contributes to the substrate binding site. FMN is bound at residue 306–330 (DSGIRSGLDVVRMIAQGADGVLIGR).

This sequence belongs to the FMN-dependent alpha-hydroxy acid dehydrogenase family. The cofactor is FMN.

Its subcellular location is the cell inner membrane. The catalysed reaction is (S)-lactate + A = pyruvate + AH2. Functionally, catalyzes the conversion of L-lactate to pyruvate. Is coupled to the respiratory chain. This is L-lactate dehydrogenase from Allorhizobium ampelinum (strain ATCC BAA-846 / DSM 112012 / S4) (Agrobacterium vitis (strain S4)).